The primary structure comprises 221 residues: Protein RER1D (221 aa).

A run of 4 helical transmembrane segments spans residues 41 to 58, 64 to 84, 128 to 148, and 149 to 169; these read IVRR…YIYR, GYFV…IGFL, FVVA…FWPI, and LLCY…VHMF. A disordered region spans residues 200–221; that stretch reads KGDGGDDRPSSSNSSQGNEKQD. Polar residues predominate over residues 209-221; sequence SSSNSSQGNEKQD.

It belongs to the RER1 family.

The protein resides in the membrane. Its function is as follows. Involved in the retrieval of endoplasmic reticulum membrane proteins from the early Golgi compartment. This Arabidopsis thaliana (Mouse-ear cress) protein is Protein RER1D.